Consider the following 712-residue polypeptide: Polyribonucleotide nucleotidyltransferase (712 aa).

Asp-487 and Asp-493 together coordinate Mg(2+). The KH domain maps to 554-613; it reads PRIEVMNIPVDKIREVIGSGGKVIREIVEKTGAKINIEDDGTVKIASSSGKEIEAARKWI. An S1 motif domain is found at 623 to 691; the sequence is GQIYEGTVVK…ERGKVRLSMK (69 aa).

Belongs to the polyribonucleotide nucleotidyltransferase family. It depends on Mg(2+) as a cofactor.

It localises to the cytoplasm. It catalyses the reaction RNA(n+1) + phosphate = RNA(n) + a ribonucleoside 5'-diphosphate. Functionally, involved in mRNA degradation. Catalyzes the phosphorolysis of single-stranded polyribonucleotides processively in the 3'- to 5'-direction. The polypeptide is Polyribonucleotide nucleotidyltransferase (Rhizobium etli (strain CIAT 652)).